We begin with the raw amino-acid sequence, 224 residues long: GTP cyclohydrolase 1 (224 aa).

A disordered region spans residues 1-20 (MKQEKTVSPTVENNRSAESR). Residues cysteine 114, histidine 117, and cysteine 185 each coordinate Zn(2+).

This sequence belongs to the GTP cyclohydrolase I family. In terms of assembly, toroid-shaped homodecamer, composed of two pentamers of five dimers.

The enzyme catalyses GTP + H2O = 7,8-dihydroneopterin 3'-triphosphate + formate + H(+). It functions in the pathway cofactor biosynthesis; 7,8-dihydroneopterin triphosphate biosynthesis; 7,8-dihydroneopterin triphosphate from GTP: step 1/1. This is GTP cyclohydrolase 1 from Chlorobaculum tepidum (strain ATCC 49652 / DSM 12025 / NBRC 103806 / TLS) (Chlorobium tepidum).